Reading from the N-terminus, the 160-residue chain is uncharacterized protein (160 aa).

The protein resides in the cytoplasm. It localises to the nucleus. This is an uncharacterized protein from Schizosaccharomyces pombe (strain 972 / ATCC 24843) (Fission yeast).